The chain runs to 1289 residues: SH3 domain and tetratricopeptide repeat-containing protein 2 (1289 aa).

SH3 domains lie at Glu-176–Val-239 and Ile-267–Cys-330. Residues Ser-393–Pro-442 form a disordered region. Residues Gly-414–Ser-424 are compositionally biased toward low complexity. TPR repeat units lie at residues Ala-529 to Ala-562, Arg-758 to Leu-791, Gly-837 to Met-870, Gly-1002 to Leu-1038, Leu-1085 to Arg-1119, Met-1120 to Ala-1153, Leu-1167 to Trp-1200, and Ala-1211 to Met-1245.

In Mus musculus (Mouse), this protein is SH3 domain and tetratricopeptide repeat-containing protein 2 (Sh3tc2).